The sequence spans 204 residues: Ras-related and estrogen-regulated growth inhibitor-like protein (204 aa).

Positions 1–204 are small GTPase-like; the sequence is MNDVKLTVLG…NVFGKRRKSV (204 aa). GTP-binding positions include 10–17, 57–63, and 122–125; these read GGEGTGKS, DPCSQPQ, and NKQD.

It belongs to the small GTPase superfamily. Ras family.

It catalyses the reaction GTP + H2O = GDP + phosphate + H(+). Functionally, binds GDP/GTP and may possess intrinsic GTPase activity. The sequence is that of Ras-related and estrogen-regulated growth inhibitor-like protein (RERGL) from Bos taurus (Bovine).